A 107-amino-acid polypeptide reads, in one-letter code: N(4)-acetylcytidine amidohydrolase (107 aa).

The ASCH domain maps to 6–102 (TFYRRFQADI…RLYVISFSLV (97 aa)). Residue K20 is the Proton acceptor of the active site. The active-site Nucleophile is the T23. E73 acts as the Proton donor in catalysis.

This sequence belongs to the N(4)-acetylcytidine amidohydrolase family.

It catalyses the reaction N(4)-acetylcytidine + H2O = cytidine + acetate + H(+). It carries out the reaction N(4)-acetyl-2'-deoxycytidine + H2O = 2'-deoxycytidine + acetate + H(+). The catalysed reaction is N(4)-acetylcytosine + H2O = cytosine + acetate + H(+). Functionally, catalyzes the hydrolysis of N(4)-acetylcytidine (ac4C). This is N(4)-acetylcytidine amidohydrolase from Edwardsiella ictaluri (strain 93-146).